The primary structure comprises 333 residues: Na(+)-translocating ferredoxin:NAD(+) oxidoreductase complex subunit B (333 aa).

The interval 1–27 (MLNAILVPVGILGVFGLIFGIGLAIAA) is hydrophobic. One can recognise a 4Fe-4S domain in the interval 33-92 (YEDPRVPLVRAALPGANCGGCGLPGCDALAANIVGGSAAIDACPVGGASCAAAVAEIMGM). Residues C50, C53, C58, C75, C138, C142, C148, C152, C172, C175, C178, C182, C217, C220, C223, C227, C246, C249, C252, C256, C279, C282, C285, C289, C310, C313, C316, and C320 each contribute to the [4Fe-4S] cluster site. 4Fe-4S ferredoxin-type domains lie at 126 to 162 (REAM…IGED), 163 to 192 (GLPK…LVPE), 207 to 237 (KIAR…VENN), 239 to 266 (AKID…GDVE), 270 to 299 (STAY…GEIK), and 301 to 330 (PPYV…MRPN).

Belongs to the 4Fe4S bacterial-type ferredoxin family. RnfB subfamily. As to quaternary structure, the complex is composed of six subunits: RnfA, RnfB, RnfC, RnfD, RnfE and RnfG. [4Fe-4S] cluster serves as cofactor.

Its subcellular location is the cell membrane. The catalysed reaction is 2 reduced [2Fe-2S]-[ferredoxin] + Na(+)(in) + NAD(+) + H(+) = 2 oxidized [2Fe-2S]-[ferredoxin] + Na(+)(out) + NADH. Functionally, part of a membrane-bound complex that couples electron transfer with translocation of ions across the membrane. Couples electron transfer from reduced ferredoxin to NAD(+) with electrogenic movement of Na(+) out of the cell. Involved in caffeate respiration. The protein is Na(+)-translocating ferredoxin:NAD(+) oxidoreductase complex subunit B of Acetobacterium woodii (strain ATCC 29683 / DSM 1030 / JCM 2381 / KCTC 1655 / WB1).